The sequence spans 776 residues: Photosystem I P700 chlorophyll a apoprotein A1 (776 aa).

Transmembrane regions (helical) follow at residues 76 to 99, 162 to 185, 201 to 225, 309 to 327, 368 to 391, 407 to 433, 455 to 477, and 557 to 575; these read IFSA…FHGA, LMAL…FHYH, LQHH…HVAN, VAHH…GHVY, WHAQ…HHMY, LGLF…IAVI, AIIS…LYIH, and LMIH…LILL. 2 residues coordinate [4Fe-4S] cluster: Cys599 and Cys608. 2 consecutive transmembrane segments (helical) span residues 615 to 636 and 690 to 712; these read HVFL…YFSW and LSGY…MFLF. His701 serves as a coordination point for divinylchlorophyll a'. Positions 709 and 717 each coordinate divinyl chlorophyll a. A phylloquinone-binding site is contributed by Trp718. Residues 750–770 traverse the membrane as a helical segment; the sequence is AVGVTHFLFGGIVTTWAFFHA.

This sequence belongs to the PsaA/PsaB family. As to quaternary structure, the PsaA/B heterodimer binds the P700 divinyl chlorophyll special pair and subsequent electron acceptors. PSI consists of a core antenna complex that captures photons, and an electron transfer chain that converts photonic excitation into a charge separation. The cyanobacterial PSI reaction center is composed of one copy each of PsaA,B,C,D,E,F,I,J,K,L,M and X, and forms trimeric complexes. PSI electron transfer chain: 5 divinyl chlorophyll a, 1 divinyl chlorophyll a', 2 phylloquinones and 3 4Fe-4S clusters. PSI core antenna: 90 divinyl chlorophyll a, 22 carotenoids, 3 phospholipids and 1 galactolipid. P700 is a divinyl chlorophyll a/divinyl chlorophyll a' dimer, A0 is one or more divinyl chlorophyll a, A1 is one or both phylloquinones and FX is a shared 4Fe-4S iron-sulfur center. serves as cofactor.

Its subcellular location is the cellular thylakoid membrane. The enzyme catalyses reduced [plastocyanin] + hnu + oxidized [2Fe-2S]-[ferredoxin] = oxidized [plastocyanin] + reduced [2Fe-2S]-[ferredoxin]. PsaA and PsaB bind P700, the primary electron donor of photosystem I (PSI), as well as the electron acceptors A0, A1 and FX. PSI is a plastocyanin/cytochrome c6-ferredoxin oxidoreductase, converting photonic excitation into a charge separation, which transfers an electron from the donor P700 chlorophyll pair to the spectroscopically characterized acceptors A0, A1, FX, FA and FB in turn. Oxidized P700 is reduced on the lumenal side of the thylakoid membrane by plastocyanin or cytochrome c6. The sequence is that of Photosystem I P700 chlorophyll a apoprotein A1 from Prochlorococcus marinus (strain MIT 9303).